The primary structure comprises 409 residues: DNA double-strand break repair protein Mre11 (409 aa).

Asp9, His11, Asp50, and Glu85 together coordinate Mn(2+). The Proton donor role is filled by His86. 3 residues coordinate Mn(2+): His170, His199, and His201.

The protein belongs to the MRE11/RAD32 family. Homodimer. Forms a heterotetramer composed of two Mre11 subunits and two Rad50 subunits. Mn(2+) serves as cofactor.

Nuclease activity is regulated by Rad50. Part of the Rad50/Mre11 complex, which is involved in the early steps of DNA double-strand break (DSB) repair. The complex may facilitate opening of the processed DNA ends to aid in the recruitment of HerA and NurA. Mre11 binds to DSB ends and has both double-stranded 3'-5' exonuclease activity and single-stranded endonuclease activity. The chain is DNA double-strand break repair protein Mre11 from Aeropyrum pernix (strain ATCC 700893 / DSM 11879 / JCM 9820 / NBRC 100138 / K1).